Here is a 455-residue protein sequence, read N- to C-terminus: uncharacterized protein (455 aa).

Asparagine 42, asparagine 49, and asparagine 70 each carry an N-linked (GlcNAc...) asparagine glycan. 4 consecutive transmembrane segments (helical) span residues 127–147 (AILISFGLIIGALLYLYTWIF), 153–173 (SLLDWMFISCSGIIHQFMFRI), 177–197 (ICALVLIGFWLLCCLVIITYY), and 377–397 (YKFCFIFYGIAIIVFILEIIF). Asparagine 403 is a glycosylation site (N-linked (GlcNAc...) asparagine).

The protein localises to the membrane. This is an uncharacterized protein from Caenorhabditis elegans.